Here is a 200-residue protein sequence, read N- to C-terminus: NAD--protein ADP-ribosyltransferase modA (200 aa).

R72 lines the NAD(+) pocket. E165 is an active-site residue.

This sequence belongs to the Tevenvirinae NAD--protein ADP-ribosyltransferase modA family.

It is found in the virion. The catalysed reaction is L-arginyl-[protein] + NAD(+) = N(omega)-(ADP-D-ribosyl)-L-arginyl-[protein] + nicotinamide + H(+). Its function is as follows. ADP-ribosyltransferase that efficiently ADP-ribosylates both alpha subunits of host RNA polymerase RPOA. The ModA-induced ADP-ribosylation of RPOA alpha subunits inhibits transcription from viral early promoters. The chain is NAD--protein ADP-ribosyltransferase modA from Enterobacteria phage T4 (Bacteriophage T4).